The sequence spans 351 residues: Ubiquinol oxidase 4, chloroplastic/chromoplastic (351 aa).

Residues methionine 1–glutamine 56 constitute a chloroplast and chromoplast transit peptide. A disordered region spans residues glutamate 71–serine 91. A helical membrane pass occupies residues phenylalanine 132 to methionine 152. Fe cation contacts are provided by glutamate 136, glutamate 175, and histidine 178. A helical membrane pass occupies residues phenylalanine 195–serine 215. 3 residues coordinate Fe cation: glutamate 227, glutamate 296, and histidine 299.

This sequence belongs to the alternative oxidase family. The cofactor is Fe cation. In terms of tissue distribution, ubiquitous.

It localises to the plastid. The protein localises to the chloroplast thylakoid membrane. The protein resides in the chromoplast membrane. It carries out the reaction 2 a ubiquinol + O2 = 2 a ubiquinone + 2 H2O. Its function is as follows. Acts early in chloroplast biogenesis as a component of a redox chain responsible for phytoene desaturation. Prevents the generation of toxic oxygen radicals and photooxidation of the nascent photosynthetic apparatus. Involved in the differentiation of multiple plastid types, including chloroplasts, amyloplasts, and etioplasts. Might participate in the chloroplast respiratory chain. The sequence is that of Ubiquinol oxidase 4, chloroplastic/chromoplastic (AOX4) from Arabidopsis thaliana (Mouse-ear cress).